Consider the following 86-residue polypeptide: Small ribosomal subunit protein uS17 (86 aa).

The protein belongs to the universal ribosomal protein uS17 family. In terms of assembly, part of the 30S ribosomal subunit.

Functionally, one of the primary rRNA binding proteins, it binds specifically to the 5'-end of 16S ribosomal RNA. The polypeptide is Small ribosomal subunit protein uS17 (Helicobacter acinonychis (strain Sheeba)).